The primary structure comprises 119 residues: MDTLCYTLLLLTTPSWVLSQVTLKESGPVLVKPTETLTLTCTVSGFSLSNARMGVSWIRQPPGKALEWLAHIFSNDEKSYSTSLKSRLTISKDTSKSQVVLTMTNMDPVDTATYYCARI.

An N-terminal signal peptide occupies residues 1–19 (MDTLCYTLLLLTTPSWVLS). Glutamine 20 is modified (pyrrolidone carboxylic acid). The framework-1 stretch occupies residues 20–44 (QVTLKESGPVLVKPTETLTLTCTVS). The Ig-like domain occupies 20 to 119 (QVTLKESGPV…DTATYYCARI (100 aa)). A disulfide bridge links cysteine 41 with cysteine 116. Residues 45-54 (GFSLSNARMG) form a complementarity-determining-1 region. The tract at residues 55-71 (VSWIRQPPGKALEWLAH) is framework-2. The segment at 72 to 78 (IFSNDEK) is complementarity-determining-2. The segment at 79–116 (SYSTSLKSRLTISKDTSKSQVVLTMTNMDPVDTATYYC) is framework-3. Residues 117–119 (ARI) form a complementarity-determining-3 region.

As to quaternary structure, immunoglobulins are composed of two identical heavy chains and two identical light chains; disulfide-linked.

It localises to the secreted. It is found in the cell membrane. Functionally, v region of the variable domain of immunoglobulin heavy chains that participates in the antigen recognition. Immunoglobulins, also known as antibodies, are membrane-bound or secreted glycoproteins produced by B lymphocytes. In the recognition phase of humoral immunity, the membrane-bound immunoglobulins serve as receptors which, upon binding of a specific antigen, trigger the clonal expansion and differentiation of B lymphocytes into immunoglobulins-secreting plasma cells. Secreted immunoglobulins mediate the effector phase of humoral immunity, which results in the elimination of bound antigens. The antigen binding site is formed by the variable domain of one heavy chain, together with that of its associated light chain. Thus, each immunoglobulin has two antigen binding sites with remarkable affinity for a particular antigen. The variable domains are assembled by a process called V-(D)-J rearrangement and can then be subjected to somatic hypermutations which, after exposure to antigen and selection, allow affinity maturation for a particular antigen. The protein is Immunoglobulin heavy variable 2-26 of Homo sapiens (Human).